The chain runs to 101 residues: Putative defensin-like protein 86 (101 aa).

The signal sequence occupies residues 1 to 27; sequence MAITKMSSLIILSLMMLTFIYIPMISG. Cystine bridges form between Cys-35-Cys-71, Cys-39-Cys-59, Cys-45-Cys-69, and Cys-49-Cys-70.

This sequence belongs to the DEFL family.

The protein localises to the secreted. The chain is Putative defensin-like protein 86 (LCR82) from Arabidopsis thaliana (Mouse-ear cress).